The primary structure comprises 303 residues: 1D-myo-inositol 2-acetamido-2-deoxy-alpha-D-glucopyranoside deacetylase (303 aa).

Positions 13, 16, and 147 each coordinate Zn(2+).

It belongs to the MshB deacetylase family. Zn(2+) is required as a cofactor.

The catalysed reaction is 1D-myo-inositol 2-acetamido-2-deoxy-alpha-D-glucopyranoside + H2O = 1D-myo-inositol 2-amino-2-deoxy-alpha-D-glucopyranoside + acetate. Catalyzes the deacetylation of 1D-myo-inositol 2-acetamido-2-deoxy-alpha-D-glucopyranoside (GlcNAc-Ins) in the mycothiol biosynthesis pathway. The polypeptide is 1D-myo-inositol 2-acetamido-2-deoxy-alpha-D-glucopyranoside deacetylase (Mycobacterium tuberculosis (strain ATCC 25177 / H37Ra)).